Here is a 485-residue protein sequence, read N- to C-terminus: Glutamate mutase epsilon subunit (485 aa).

L-glutamate is bound at residue Arg-66. Residue Gly-68 participates in adenosylcob(III)alamin binding. L-glutamate is bound at residue Arg-100. Residue Asn-123 coordinates adenosylcob(III)alamin. Residues 149–150, Glu-171, and Tyr-177 contribute to the L-glutamate site; that span reads RH. Adenosylcob(III)alamin is bound at residue Pro-180. An L-glutamate-binding site is contributed by Tyr-181. Phe-297, Lys-326, Glu-330, and Ile-334 together coordinate adenosylcob(III)alamin.

Belongs to the methylaspartate mutase GlmE subunit family. In terms of assembly, heterotetramer composed of 2 epsilon subunits (GlmE) and 2 sigma subunits (GlmS). GlmE exists as a homodimer and GlmS as a monomer. The cofactor is adenosylcob(III)alamin.

It carries out the reaction (2S,3S)-3-methyl-L-aspartate = L-glutamate. The protein operates within amino-acid degradation; L-glutamate degradation via mesaconate pathway; acetate and pyruvate from L-glutamate: step 1/4. Catalyzes the carbon skeleton rearrangement of L-glutamate to L-threo-3-methylaspartate ((2S,3S)-3-methylaspartate). In Treponema denticola (strain ATCC 35405 / DSM 14222 / CIP 103919 / JCM 8153 / KCTC 15104), this protein is Glutamate mutase epsilon subunit.